The primary structure comprises 27 residues: Phospholipase A2 P-elapitoxin-Aa1a alpha chain (27 aa).

This sequence belongs to the phospholipase A2 family. Group I subfamily. As to quaternary structure, heterotrimer of alpha, beta and gamma chains, each related to PLA2. Requires Ca(2+) as cofactor. Expressed by the venom gland.

It localises to the secreted. It catalyses the reaction a 1,2-diacyl-sn-glycero-3-phosphocholine + H2O = a 1-acyl-sn-glycero-3-phosphocholine + a fatty acid + H(+). Functionally, heterotrimer: presynaptic neurotoxin. Inhibits nerve-evoked twitch contractions but not responses to cholinergic agonists acetylcholine and carbachol and to depolarizing agonist KCl. Causes a fade in tetanic contractions. Displays a triphasic mode of action with depression, enhancement and blockade of neurotransmission. Does not display myotoxic activity such as changes in baseline muscle tension or inhibition of directly stimulated muscle twitches. All subunits are necessary for maximum toxicity. Its function is as follows. Monomer: Snake venom phospholipase A2 (PLA2) alpha chain that has enzymatic activity. PLA2 catalyzes the calcium-dependent hydrolysis of the 2-acyl groups in 3-sn-phosphoglycerides. The chain is Phospholipase A2 P-elapitoxin-Aa1a alpha chain from Acanthophis antarcticus (Common death adder).